A 62-amino-acid chain; its full sequence is MRKLKMMLCVMMLPLVVVGCTSKQSVSQCVKPRLPPAWIMQPPPDFTWQTPLNGIISPSERG.

Residues 1–19 (MRKLKMMLCVMMLPLVVVG) form the signal peptide. A lipid anchor (N-palmitoyl cysteine; by host) is attached at cysteine 20. Cysteine 20 carries S-diacylglycerol cysteine; by host lipidation. The Periplasmic portion of the chain corresponds to 20–62 (CTSKQSVSQCVKPRLPPAWIMQPPPDFTWQTPLNGIISPSERG). Residues 32-44 (PRLPPAWIMQPPP) form a proline-rich region.

The protein belongs to the Lambdavirus o-spanin family. In terms of assembly, homodimer; disulfide-linked. Interacts (via C-terminus) with the spanin inner membrane subunit (via C-terminus). Part of the spanin complex which spans the entire periplasmic space. The spanin complex is composed of one homodimer of the i-spanin linked by intermolecular disulfide bonds involving two Cys residues and one homodimer of the o-spanin covalently linked by an intermolecular disulfide bond involving one Cys.

Its subcellular location is the host cell outer membrane. In terms of biological role, component of the spanin complex that disrupts the host outer membrane and participates in cell lysis during virus exit. The spanin complex conducts the final step in host lysis by disrupting the outer membrane after holin and endolysin action have permeabilized the inner membrane and degraded the host peptidoglycans. Host outer membrane disruption is due to local fusion between the inner and outer membrane performed by the spanin complex. This Escherichia coli (Bacteriophage 21) protein is Spanin, outer lipoprotein subunit (Rz1).